The sequence spans 32 residues: Toxic phospholipase A2 (32 aa).

It belongs to the phospholipase A2 family. Group III subfamily. It depends on Ca(2+) as a cofactor.

The protein localises to the secreted. Its subcellular location is the nematocyst. The enzyme catalyses a 1,2-diacyl-sn-glycero-3-phosphocholine + H2O = a 1-acyl-sn-glycero-3-phosphocholine + a fatty acid + H(+). In terms of biological role, PLA2 catalyzes the calcium-dependent hydrolysis of the 2-acyl groups in 3-sn-phosphoglycerides. This is Toxic phospholipase A2 from Rhopilema nomadica (Mediteranean medusa).